The chain runs to 286 residues: Leukocyte cell-derived chemotaxin 1 (286 aa).

Residues 29-49 (LVAFIAGAALLLFGGVGAFYL) form a helical membrane-spanning segment. One can recognise a BRICHOS domain in the interval 75–157 (DSAEGTIVEV…FCADLPIYWH (83 aa)). Cys102 and Cys149 are joined by a disulfide. Residues 166 to 169 (RKRR) constitute a propeptide that is removed on maturation. Residues 166 to 176 (RKRRSATRMRR) show a composition bias toward basic residues. The tract at residues 166-220 (RKRRSATRMRRQTSAGVNRQPARRRNSTASARDERPTGPEYNPENPYHQNQGSEG) is disordered. N-linked (GlcNAc...) asparagine glycosylation is present at Asn191. Disulfide bonds link Cys234–Cys238, Cys235–Cys275, Cys245–Cys269, and Cys249–Cys265.

Belongs to the chondromodulin-1 family. Post-translationally, after cleavage, the post-translationally modified ChM-I is secreted as a glycoprotein.

It is found in the secreted. It localises to the extracellular space. Its subcellular location is the extracellular matrix. The protein resides in the endomembrane system. In terms of biological role, bifunctional growth regulator. May contribute to the rapid growth of cartilage and vascular invasion prior to the replacement of cartilage by bone during endochondral bone development. Plays a role as antiangiogenic factor in cardiac valves to suppress neovascularization. The polypeptide is Leukocyte cell-derived chemotaxin 1 (Danio rerio (Zebrafish)).